The primary structure comprises 289 residues: Oxaloacetate decarboxylase (289 aa).

A substrate-binding site is contributed by Ser50. Asp88 contributes to the Mg(2+) binding site. Substrate-binding residues include Arg159 and His235.

This sequence belongs to the isocitrate lyase family. Oxaloacetate decarboxylase subfamily. Homotetramer; dimer of dimers. Mg(2+) serves as cofactor.

It catalyses the reaction oxaloacetate + H(+) = pyruvate + CO2. In terms of biological role, catalyzes the decarboxylation of oxaloacetate into pyruvate. Seems to play a role in maintaining cellular concentrations of bicarbonate and pyruvate. In Pseudomonas fluorescens (strain SBW25), this protein is Oxaloacetate decarboxylase.